Here is a 597-residue protein sequence, read N- to C-terminus: Probable bifunctional ADP-ribose hydrolase/ADP-ribosyltransferase (597 aa).

The Macro domain occupies 99–299 (SRLIKHGDLG…FYSKLLGPSH (201 aa)). Positions 118, 119, and 133 each coordinate ADP-D-ribose. Residues Cys139, His144, and Cys146 each coordinate Zn(2+). Residues Cys146, Ile147, Asp148, Ser244, Thr245, Gly246, and Phe248 each coordinate ADP-D-ribose. One can recognise a Deacetylase sirtuin-type domain in the interval 307–597 (ENTPQGSLSL…IGRAIPLLLE (291 aa)). NAD(+)-binding positions include Ala333, 418 to 421 (SNAD), and Gln438. Residues Cys446, Cys450, Cys485, and Cys488 each contribute to the Zn(2+) site. Residue Val584 coordinates NAD(+).

The protein in the N-terminal section; belongs to the MacroD-type family. Zn-Macro subfamily. This sequence in the C-terminal section; belongs to the sirtuin family. Class M subfamily. As to quaternary structure, monomer. The cofactor is Zn(2+).

It catalyses the reaction 5-O-(ADP-D-ribosyl)-L-glutamyl-[protein] + H2O = L-glutamyl-[protein] + ADP-D-ribose + H(+). In terms of biological role, is probably a bifunctional enzyme with ADP-ribosyltransferase and ADP-ribosylhydrolase activities. In vitro, can act as an ADP-ribosylhydrolase that hydrolyzes ADP-ribosyl-glutamate bonds. It can remove the ADP-ribosyl modification from the human mono-ADP-ribosylated PARP1 E988Q mutant, which is primarily modified on glutamate site with only minor aspartate contribution. It cannot hydrolyze the ADP-ribosyl-arpartate bond in ribosylated S.pyogenes GcvH-L. The sequence is that of Probable bifunctional ADP-ribose hydrolase/ADP-ribosyltransferase from Fusarium oxysporum f. sp. cubense.